We begin with the raw amino-acid sequence, 363 residues long: Protein-glutamate methylesterase/protein-glutamine glutaminase of group 3 operon (363 aa).

A Response regulatory domain is found at 7-124; it reads RVLIVDDSAS…RQALLECSTR (118 aa). Position 58 is a 4-aspartylphosphate (Asp58). The CheB-type methylesterase domain maps to 166–357; that stretch reads PTTERIVCIG…REIMLWYQAG (192 aa). Catalysis depends on residues Ser177, His203, and Asp299.

It belongs to the CheB family. Post-translationally, phosphorylated by CheA. Phosphorylation of the N-terminal regulatory domain activates the methylesterase activity.

Its subcellular location is the cytoplasm. It catalyses the reaction [protein]-L-glutamate 5-O-methyl ester + H2O = L-glutamyl-[protein] + methanol + H(+). The enzyme catalyses L-glutaminyl-[protein] + H2O = L-glutamyl-[protein] + NH4(+). Functionally, involved in chemotaxis. Part of a chemotaxis signal transduction system that modulates chemotaxis in response to various stimuli. Catalyzes the demethylation of specific methylglutamate residues introduced into the chemoreceptors (methyl-accepting chemotaxis proteins or MCP) by CheR. Also mediates the irreversible deamidation of specific glutamine residues to glutamic acid. The protein is Protein-glutamate methylesterase/protein-glutamine glutaminase of group 3 operon of Bradyrhizobium diazoefficiens (strain JCM 10833 / BCRC 13528 / IAM 13628 / NBRC 14792 / USDA 110).